The following is a 299-amino-acid chain: tRNA dimethylallyltransferase (299 aa).

Gly11 to Thr18 is an ATP binding site. Position 13–18 (Thr13–Thr18) interacts with substrate. The segment at Asp36–Gln39 is interaction with substrate tRNA.

Belongs to the IPP transferase family. As to quaternary structure, monomer. It depends on Mg(2+) as a cofactor.

It catalyses the reaction adenosine(37) in tRNA + dimethylallyl diphosphate = N(6)-dimethylallyladenosine(37) in tRNA + diphosphate. In terms of biological role, catalyzes the transfer of a dimethylallyl group onto the adenine at position 37 in tRNAs that read codons beginning with uridine, leading to the formation of N6-(dimethylallyl)adenosine (i(6)A). The protein is tRNA dimethylallyltransferase of Streptococcus pyogenes serotype M4 (strain MGAS10750).